The primary structure comprises 550 residues: Hydroxylamine reductase (550 aa).

[2Fe-2S] cluster is bound by residues Cys-3, Cys-6, Cys-18, and Cys-25. Hybrid [4Fe-2O-2S] cluster contacts are provided by His-249, Glu-273, Cys-317, Cys-405, Cys-433, Cys-458, Glu-492, and Lys-494. At Cys-405 the chain carries Cysteine persulfide.

Belongs to the HCP family. The cofactor is [2Fe-2S] cluster. It depends on hybrid [4Fe-2O-2S] cluster as a cofactor.

The protein resides in the cytoplasm. It catalyses the reaction A + NH4(+) + H2O = hydroxylamine + AH2 + H(+). In terms of biological role, catalyzes the reduction of hydroxylamine to form NH(3) and H(2)O. The sequence is that of Hydroxylamine reductase from Shigella flexneri serotype 5b (strain 8401).